Reading from the N-terminus, the 468-residue chain is Ribosomal protein uS12 methylthiotransferase RimO (468 aa).

The 115-residue stretch at 16–130 folds into the MTTase N-terminal domain; that stretch reads NKIHFISLGC…ILSAIESRES (115 aa). [4Fe-4S] cluster-binding residues include Cys-25, Cys-61, Cys-93, Cys-164, Cys-168, and Cys-171. Residues 150-382 enclose the Radical SAM core domain; that stretch reads STPKHYAYLK…SQIQKRNVDK (233 aa). Positions 385–455 constitute a TRAM domain; that stretch reads QKLIGEKIEA…GYDLVGRVVK (71 aa).

The protein belongs to the methylthiotransferase family. RimO subfamily. The cofactor is [4Fe-4S] cluster.

The protein localises to the cytoplasm. The enzyme catalyses L-aspartate(89)-[ribosomal protein uS12]-hydrogen + (sulfur carrier)-SH + AH2 + 2 S-adenosyl-L-methionine = 3-methylsulfanyl-L-aspartate(89)-[ribosomal protein uS12]-hydrogen + (sulfur carrier)-H + 5'-deoxyadenosine + L-methionine + A + S-adenosyl-L-homocysteine + 2 H(+). In terms of biological role, catalyzes the methylthiolation of an aspartic acid residue of ribosomal protein uS12. The protein is Ribosomal protein uS12 methylthiotransferase RimO of Chlamydia pneumoniae (Chlamydophila pneumoniae).